The primary structure comprises 297 residues: HTH-type transcriptional regulator ArgP (297 aa).

Residues 4–60 (PDYRTLQALDAVIRERGFERAAQKLCITQSAVSQRIKQLENMFGQPLLVRTVPPRPT) form the HTH lysR-type domain. A DNA-binding region (H-T-H motif) is located at residues 21 to 40 (FERAAQKLCITQSAVSQRIK).

The protein belongs to the LysR transcriptional regulatory family. In terms of assembly, homodimer.

In terms of biological role, controls the transcription of genes involved in arginine and lysine metabolism. The protein is HTH-type transcriptional regulator ArgP of Salmonella dublin (strain CT_02021853).